The chain runs to 359 residues: 3-dehydroquinate synthase (359 aa).

Residues 69–74 (DAETGK), 103–107 (GAATD), 127–128 (TT), K140, and K149 each bind NAD(+). The Zn(2+) site is built by E182, H244, and H260.

This sequence belongs to the sugar phosphate cyclases superfamily. Dehydroquinate synthase family. Co(2+) is required as a cofactor. Requires Zn(2+) as cofactor. It depends on NAD(+) as a cofactor.

The protein resides in the cytoplasm. It carries out the reaction 7-phospho-2-dehydro-3-deoxy-D-arabino-heptonate = 3-dehydroquinate + phosphate. It functions in the pathway metabolic intermediate biosynthesis; chorismate biosynthesis; chorismate from D-erythrose 4-phosphate and phosphoenolpyruvate: step 2/7. Catalyzes the conversion of 3-deoxy-D-arabino-heptulosonate 7-phosphate (DAHP) to dehydroquinate (DHQ). The protein is 3-dehydroquinate synthase of Corynebacterium diphtheriae (strain ATCC 700971 / NCTC 13129 / Biotype gravis).